Reading from the N-terminus, the 148-residue chain is Cytochrome c-type biogenesis protein CcmE (148 aa).

Residues 1 to 7 (MTRKQRR) are Cytoplasmic-facing. Residues 8 to 28 (LYFVLLGMAALGGAVALVLTA) traverse the membrane as a helical; Signal-anchor for type II membrane protein segment. At 29-148 (ISDSLVYFYS…QWNDGKQPKQ (120 aa)) the chain is on the periplasmic side. The heme site is built by His121 and Tyr125.

It belongs to the CcmE/CycJ family.

It is found in the cell inner membrane. Its function is as follows. Heme chaperone required for the biogenesis of c-type cytochromes. Transiently binds heme delivered by CcmC and transfers the heme to apo-cytochromes in a process facilitated by CcmF and CcmH. This chain is Cytochrome c-type biogenesis protein CcmE, found in Paramagnetospirillum magneticum (strain ATCC 700264 / AMB-1) (Magnetospirillum magneticum).